The following is a 438-amino-acid chain: Glucosamine kinase (438 aa).

Residues K133, 186 to 188 (AYL), and D193 contribute to the ATP site. D-glucosamine is bound at residue D300. The Mg(2+) site is built by Q305, D317, and D319. Residues 405–420 (QEVREYLYAVRHLPHW) carry the Substrate specificity determinant motif motif. A D-glucosamine-binding site is contributed by E409.

Belongs to the actinobacterial glucosamine kinase family. Monomer. Requires Mg(2+) as cofactor.

The enzyme catalyses D-glucosamine + ATP = D-glucosamine 6-phosphate + ADP + H(+). Its function is as follows. Catalyzes the ATP-dependent phosphorylation of D-glucosamine (GlcN) to D-glucosamine 6-phosphate. May be involved in the phosphorylation of acquired extracellular GlcN derived from the hydrolysis of chitosan, i.e., in the incorporation of exogenous GlcN into the bacterial GlcNAc metabolism. To a lesser extent, is also active on glucose, but is unable to phosphorylate maltose, 18 other sugars and several aminoglycoside antibiotics. The polypeptide is Glucosamine kinase (Streptacidiphilus jiangxiensis).